A 154-amino-acid polypeptide reads, in one-letter code: Small ribosomal subunit protein uS9 (154 aa).

2 disordered regions span residues 1–33 and 115–154; these read MVPP…SGLG and PENN…YSKR. Over residues 135–154 the composition is skewed to basic residues; sequence KERKKAGLKKARKAPQYSKR.

Belongs to the universal ribosomal protein uS9 family.

This chain is Small ribosomal subunit protein uS9, found in Tropheryma whipplei (strain TW08/27) (Whipple's bacillus).